The following is a 130-amino-acid chain: Putative antitoxin VapB50 (130 aa).

In terms of biological role, possibly the antitoxin component of a type II toxin-antitoxin (TA) system. Its cognate toxin is VapC50. This Mycobacterium tuberculosis (strain ATCC 25618 / H37Rv) protein is Putative antitoxin VapB50.